A 137-amino-acid chain; its full sequence is Nucleoside diphosphate kinase (137 aa).

6 residues coordinate ATP: Lys-9, Phe-57, Arg-85, Thr-91, Arg-102, and Asn-112. His-115 (pros-phosphohistidine intermediate) is an active-site residue.

It belongs to the NDK family. As to quaternary structure, homotetramer. The cofactor is Mg(2+).

The protein localises to the cytoplasm. The enzyme catalyses a 2'-deoxyribonucleoside 5'-diphosphate + ATP = a 2'-deoxyribonucleoside 5'-triphosphate + ADP. The catalysed reaction is a ribonucleoside 5'-diphosphate + ATP = a ribonucleoside 5'-triphosphate + ADP. In terms of biological role, major role in the synthesis of nucleoside triphosphates other than ATP. The ATP gamma phosphate is transferred to the NDP beta phosphate via a ping-pong mechanism, using a phosphorylated active-site intermediate. This chain is Nucleoside diphosphate kinase, found in Citrifermentans bemidjiense (strain ATCC BAA-1014 / DSM 16622 / JCM 12645 / Bem) (Geobacter bemidjiensis).